The primary structure comprises 498 residues: Tyrosine 3-monooxygenase (498 aa).

Over residues 1–10 the composition is skewed to pro residues; it reads MPTPSAPSPQ. The disordered stretch occupies residues 1 to 31; the sequence is MPTPSAPSPQPKGFRRAVSEQDAKQAEAVTS. Position 19 is a phosphoserine; by CaMK2 (S19). Phosphoserine is present on S31. S40 is modified (phosphoserine; by CaMK2 and PKA). Fe cation-binding residues include H331, H336, and E376. S472 carries the post-translational modification Phosphoserine.

It belongs to the biopterin-dependent aromatic amino acid hydroxylase family. As to quaternary structure, homotetramer. Interacts (when phosphorylated at Ser-19) with YWHAG; one YWHAG dimer binds to one TH tetramer and this interaction may influence the phosphorylation and dephosphorylation of other sites. Interacts with NT5DC2; the interaction results in reduced phosphorylation and decreased catalytic activity of TH. Requires Fe(2+) as cofactor. In terms of processing, phosphorylated on Ser-19, Ser-31 and Ser-40 by several protein kinases with different site specificities. Phosphorylation at Ser-31 and Ser-40 leads to an increase of TH activity. Phosphorylation at Ser-40 activates the enzyme and also counteracts the feedback inhibition of TH by catecholamines. Phosphorylation of Ser-19 and Ser-31 triggers the proteasomal degradation of TH through the ubiquitin-proteasome pathway. Phosphorylation at Ser-31 facilitates transport of TH from the soma to the nerve terminals via the microtubule network. Phosphorylation at Ser-19 induces the high-affinity binding to the 14-3-3 protein YWHAG; this interaction may influence the phosphorylation and dephosphorylation of other sites. Ser-19 increases the phosphorylation at Ser-40 in a hierarchical manner, leading to increased activity.

Its subcellular location is the cytoplasm. The protein resides in the perinuclear region. It is found in the nucleus. The protein localises to the cell projection. It localises to the axon. Its subcellular location is the cytoplasmic vesicle. The protein resides in the secretory vesicle. It is found in the synaptic vesicle. It carries out the reaction (6R)-L-erythro-5,6,7,8-tetrahydrobiopterin + L-tyrosine + O2 = (4aS,6R)-4a-hydroxy-L-erythro-5,6,7,8-tetrahydrobiopterin + L-dopa. The protein operates within catecholamine biosynthesis; dopamine biosynthesis; dopamine from L-tyrosine: step 1/2. Inhibited in feedback fashion by the catecholamine neurotransmitters, especially by dopamine in competition with tetrahydrobiopterin. Phosphorylation of several Ser/Thr residues in the N-terminus regulates the catalytic activity. Ser-31 and Ser-40 are readily phosphorylated to activate the catalytic activity. A cysteine modification induced by N-ethylmaleimide (NEM), inhibits tyrosine 3-monooxygenase activity through the modification of the Cys-177. Its function is as follows. Catalyzes the conversion of L-tyrosine to L-dihydroxyphenylalanine (L-Dopa), the rate-limiting step in the biosynthesis of catecholamines, dopamine, noradrenaline, and adrenaline. Uses tetrahydrobiopterin and molecular oxygen to convert tyrosine to L-Dopa. In addition to tyrosine, is able to catalyze the hydroxylation of phenylalanine and tryptophan but with lower specificity. Positively regulates the regression of retinal hyaloid vessels during postnatal development. This chain is Tyrosine 3-monooxygenase (Th), found in Rattus norvegicus (Rat).